A 1423-amino-acid chain; its full sequence is DNA-directed RNA polymerase subunit beta' (1423 aa).

4 residues coordinate Zn(2+): cysteine 71, cysteine 73, cysteine 86, and cysteine 89. 3 residues coordinate Mg(2+): aspartate 461, aspartate 463, and aspartate 465. Residues cysteine 815, cysteine 889, cysteine 896, and cysteine 899 each contribute to the Zn(2+) site.

This sequence belongs to the RNA polymerase beta' chain family. As to quaternary structure, the RNAP catalytic core consists of 2 alpha, 1 beta, 1 beta' and 1 omega subunit. When a sigma factor is associated with the core the holoenzyme is formed, which can initiate transcription. Requires Mg(2+) as cofactor. It depends on Zn(2+) as a cofactor.

It carries out the reaction RNA(n) + a ribonucleoside 5'-triphosphate = RNA(n+1) + diphosphate. In terms of biological role, DNA-dependent RNA polymerase catalyzes the transcription of DNA into RNA using the four ribonucleoside triphosphates as substrates. This is DNA-directed RNA polymerase subunit beta' from Actinobacillus pleuropneumoniae serotype 3 (strain JL03).